Here is a 331-residue protein sequence, read N- to C-terminus: Holliday junction branch migration complex subunit RuvB (331 aa).

Residues 4-182 (KDILQSSECI…FGIPMHLEFY (179 aa)) are large ATPase domain (RuvB-L). ATP is bound by residues R22, G63, K66, T67, T68, 129–131 (EDF), R172, Y182, and R219. T67 contributes to the Mg(2+) binding site. A small ATPAse domain (RuvB-S) region spans residues 183-253 (STEELTKVIK…FADQALLRLG (71 aa)). Residues 256–331 (KLGLDRQDIK…SYLNEQTYNM (76 aa)) are head domain (RuvB-H). DNA-binding residues include R309 and R314.

It belongs to the RuvB family. Homohexamer. Forms an RuvA(8)-RuvB(12)-Holliday junction (HJ) complex. HJ DNA is sandwiched between 2 RuvA tetramers; dsDNA enters through RuvA and exits via RuvB. An RuvB hexamer assembles on each DNA strand where it exits the tetramer. Each RuvB hexamer is contacted by two RuvA subunits (via domain III) on 2 adjacent RuvB subunits; this complex drives branch migration. In the full resolvosome a probable DNA-RuvA(4)-RuvB(12)-RuvC(2) complex forms which resolves the HJ.

The protein localises to the cytoplasm. It catalyses the reaction ATP + H2O = ADP + phosphate + H(+). The RuvA-RuvB-RuvC complex processes Holliday junction (HJ) DNA during genetic recombination and DNA repair, while the RuvA-RuvB complex plays an important role in the rescue of blocked DNA replication forks via replication fork reversal (RFR). RuvA specifically binds to HJ cruciform DNA, conferring on it an open structure. The RuvB hexamer acts as an ATP-dependent pump, pulling dsDNA into and through the RuvAB complex. RuvB forms 2 homohexamers on either side of HJ DNA bound by 1 or 2 RuvA tetramers; 4 subunits per hexamer contact DNA at a time. Coordinated motions by a converter formed by DNA-disengaged RuvB subunits stimulates ATP hydrolysis and nucleotide exchange. Immobilization of the converter enables RuvB to convert the ATP-contained energy into a lever motion, pulling 2 nucleotides of DNA out of the RuvA tetramer per ATP hydrolyzed, thus driving DNA branch migration. The RuvB motors rotate together with the DNA substrate, which together with the progressing nucleotide cycle form the mechanistic basis for DNA recombination by continuous HJ branch migration. Branch migration allows RuvC to scan DNA until it finds its consensus sequence, where it cleaves and resolves cruciform DNA. This Ehrlichia ruminantium (strain Gardel) protein is Holliday junction branch migration complex subunit RuvB.